The following is a 229-amino-acid chain: Endonuclease V (229 aa).

Mg(2+) contacts are provided by Asp-43 and Asp-111.

The protein belongs to the endonuclease V family. Mg(2+) is required as a cofactor.

It is found in the cytoplasm. It carries out the reaction Endonucleolytic cleavage at apurinic or apyrimidinic sites to products with a 5'-phosphate.. In terms of biological role, DNA repair enzyme involved in the repair of deaminated bases. Selectively cleaves double-stranded DNA at the second phosphodiester bond 3' to a deoxyinosine leaving behind the intact lesion on the nicked DNA. In Rippkaea orientalis (strain PCC 8801 / RF-1) (Cyanothece sp. (strain PCC 8801)), this protein is Endonuclease V.